The chain runs to 932 residues: Protocadherin gamma-A7 (932 aa).

The N-terminal stretch at 1-28 (MAAQPRGGDYRGFFLLSILLGTPWEAWA) is a signal peptide. Cadherin domains are found at residues 29-133 (GRIL…VPRF), 134-242 (LTEE…TPVF), 243-347 (SLPQ…APEV), 348-452 (TMTS…PPTF), 453-562 (PHSS…PPEI), and 570-682 (DGST…EPSD). Residues 29–692 (GRILYSVSEE…GPYNYDLTLY (664 aa)) lie on the Extracellular side of the membrane. N-linked (GlcNAc...) asparagine glycosylation is found at N419 and N545. Residues 693–713 (LVVAVATVSCVFLAFVLVLLA) form a helical membrane-spanning segment. Topologically, residues 714-932 (LRLRRWHKSR…KKKSGKKEKK (219 aa)) are cytoplasmic. Disordered stretches follow at residues 805–841 (PSIQ…WPNN) and 902–932 (ATLT…KEKK). The segment covering 922–932 (NKKKSGKKEKK) has biased composition (basic residues).

It localises to the cell membrane. Functionally, potential calcium-dependent cell-adhesion protein. May be involved in the establishment and maintenance of specific neuronal connections in the brain. This is Protocadherin gamma-A7 (PCDHGA7) from Homo sapiens (Human).